The primary structure comprises 231 residues: FPTDDDDKIVGGYTCAANSIPYQVSLNSGSHFCGGSLINSQWVVSAAHCYKSRIQVRLGEHNIDVLEGNEQFINAAKIITHPNFNGNTLDNDIMLIKLSSPATLNSRVATVSLPRSCAAAGTECLISGWGNTKSSGSSYPSLLQCLKAPVLSDSSCKSSYPGQITGNMICVGFLEGGKDSCQGDSGGPVVCNGQLQGIVSWGYGCAQKNKPGVYTKVCNYVNWIQQTIAAN.

The propeptide at 1-8 (FPTDDDDK) is activation peptide. In terms of domain architecture, Peptidase S1 spans 9–229 (IVGGYTCAAN…YVNWIQQTIA (221 aa)). 6 disulfides stabilise this stretch: C15/C145, C33/C49, C117/C218, C124/C191, C156/C170, and C181/C205. Residue H48 is the Charge relay system of the active site. 4 residues coordinate Ca(2+): E60, N62, V65, and E70. D92 serves as the catalytic Charge relay system. S185 serves as the catalytic Charge relay system.

This sequence belongs to the peptidase S1 family. The cofactor is Ca(2+).

The protein localises to the secreted. The protein resides in the extracellular space. It catalyses the reaction Preferential cleavage: Arg-|-Xaa, Lys-|-Xaa.. This Sus scrofa (Pig) protein is Trypsin.